A 329-amino-acid chain; its full sequence is Chlorophyllase-1, chloroplastic (329 aa).

A chloroplast-targeting transit peptide spans 1–21; sequence MAAMVDSKPAASVQGTPLLAT. Positions 145-149 match the GXSXG motif; that stretch reads GHSRG. Serine 147 functions as the Nucleophile in the catalytic mechanism. Catalysis depends on charge relay system residues aspartate 169 and histidine 242.

Belongs to the AB hydrolase superfamily. Lipase family.

The protein resides in the plastid. The protein localises to the chloroplast. The catalysed reaction is a chlorophyll + H2O = a chlorophyllide + phytol + H(+). It participates in porphyrin-containing compound metabolism; chlorophyll degradation. Functionally, catalyzes the hydrolysis of ester bond in chlorophyll to yield chlorophyllide and phytol. In Citrus unshiu (Satsuma mandarin), this protein is Chlorophyllase-1, chloroplastic.